A 482-amino-acid polypeptide reads, in one-letter code: Chromosomal replication initiator protein DnaA (482 aa).

The tract at residues Met-1 to Glu-71 is domain I, interacts with DnaA modulators. Residues Glu-71–Ser-139 form a domain II region. Positions Pro-140–Arg-362 are domain III, AAA+ region. Gly-186, Gly-188, Lys-189, and Thr-190 together coordinate ATP. Residues Ser-363–Glu-482 are domain IV, binds dsDNA.

It belongs to the DnaA family. As to quaternary structure, oligomerizes as a right-handed, spiral filament on DNA at oriC.

The protein resides in the cytoplasm. Its function is as follows. Plays an essential role in the initiation and regulation of chromosomal replication. ATP-DnaA binds to the origin of replication (oriC) to initiate formation of the DNA replication initiation complex once per cell cycle. Binds the DnaA box (a 9 base pair repeat at the origin) and separates the double-stranded (ds)DNA. Forms a right-handed helical filament on oriC DNA; dsDNA binds to the exterior of the filament while single-stranded (ss)DNA is stabiized in the filament's interior. The ATP-DnaA-oriC complex binds and stabilizes one strand of the AT-rich DNA unwinding element (DUE), permitting loading of DNA polymerase. After initiation quickly degrades to an ADP-DnaA complex that is not apt for DNA replication. Binds acidic phospholipids. This is Chromosomal replication initiator protein DnaA from Rhizobium johnstonii (strain DSM 114642 / LMG 32736 / 3841) (Rhizobium leguminosarum bv. viciae).